Consider the following 1531-residue polypeptide: Multidrug resistance-associated protein 1 (1531 aa).

Topologically, residues Met1–Phe33 are extracellular. Residues Asn19 and Asn23 are each glycosylated (N-linked (GlcNAc...) asparagine). A helical transmembrane segment spans residues Gln34–Phe54. The Cytoplasmic portion of the chain corresponds to Leu55–Lys74. Residues Thr75–Glu95 form a helical membrane-spanning segment. Residues Arg96–Ile100 lie on the Extracellular side of the membrane. Residues Phe101–Thr121 traverse the membrane as a helical segment. Topologically, residues Phe122–Gln133 are cytoplasmic. Residues Ser134–Arg154 form a helical membrane-spanning segment. At Ser155–Asp172 the chain is on the extracellular side. A helical membrane pass occupies residues Ile173–Asp193. The Cytoplasmic segment spans residues Arg194–Val316. Tyr277 carries the post-translational modification Phosphotyrosine. Ser289 is subject to Phosphoserine. Residues Leu317 to Leu337 form a helical membrane-spanning segment. The ABC transmembrane type-1 1 domain maps to Phe325 to Gln608. Topologically, residues Met338–Gly363 are extracellular. The chain crosses the membrane as a helical span at residues Tyr364 to Tyr384. At Phe385 to Tyr440 the chain is on the cytoplasmic side. A helical membrane pass occupies residues Ile441 to Asn461. The Extracellular portion of the chain corresponds to Leu462–Pro464. Residues Ser465 to Met485 traverse the membrane as a helical segment. Over Lys486–Ala547 the chain is Cytoplasmic. Lys503 is modified (N6-succinyllysine). A helical transmembrane segment spans residues Val548–Tyr568. The Extracellular portion of the chain corresponds to Val569–Asn590. Residues Ile591–Val611 traverse the membrane as a helical segment. The Cytoplasmic portion of the chain corresponds to Ser612–Met967. The region spanning Ile644 to Thr868 is the ABC transporter 1 domain. Residues Trp653, Gly678 to Ser685, and Gln713 contribute to the ATP site. Ser905, Ser915, and Ser930 each carry phosphoserine. Residues Lys968 to Ser988 traverse the membrane as a helical segment. The region spanning Ser975–Thr1256 is the ABC transmembrane type-1 2 domain. The Extracellular portion of the chain corresponds to Ala989–Ser1025. Asn1006 carries N-linked (GlcNAc...) asparagine glycosylation. The chain crosses the membrane as a helical span at residues Gln1026–Arg1046. The Cytoplasmic segment spans residues Cys1047–Glu1089. A helical transmembrane segment spans residues Val1090–Leu1110. Position 1111 (Ala1111) is a topological domain, extracellular. The helical transmembrane segment at Thr1112 to Phe1132 threads the bilayer. Residues Tyr1133 to Leu1203 are Cytoplasmic-facing. A helical membrane pass occupies residues Glu1204 to Ser1224. The Extracellular segment spans residues Leu1225–Ser1226. A helical membrane pass occupies residues Ala1227–Leu1247. Over Val1248–Val1531 the chain is Cytoplasmic. The ABC transporter 2 domain occupies Val1293 to Asp1527. ATP is bound at residue Gly1327–Ser1334.

The protein belongs to the ABC transporter superfamily. ABCC family. Conjugate transporter (TC 3.A.1.208) subfamily. As to quaternary structure, (Microbial infection) Interacts with human cytomegalovirus protein UL138; this interaction mediates MRP1 degradation via the lysosome. Lung, testis and peripheral blood mononuclear cells.

The protein localises to the cell membrane. Its subcellular location is the basolateral cell membrane. The enzyme catalyses ATP + H2O + xenobioticSide 1 = ADP + phosphate + xenobioticSide 2.. It catalyses the reaction an S-substituted glutathione(in) + ATP + H2O = an S-substituted glutathione(out) + ADP + phosphate + H(+). It carries out the reaction sphing-4-enine 1-phosphate(in) + ATP + H2O = sphing-4-enine 1-phosphate(out) + ADP + phosphate + H(+). The catalysed reaction is leukotriene C4(in) + ATP + H2O = leukotriene C4(out) + ADP + phosphate + H(+). The enzyme catalyses 17beta-estradiol 17-O-(beta-D-glucuronate)(in) + ATP + H2O = 17beta-estradiol 17-O-(beta-D-glucuronate)(out) + ADP + phosphate + H(+). It catalyses the reaction daunorubicin(in) + ATP + H2O = daunorubicin(out) + ADP + phosphate + H(+). It carries out the reaction vincristine(in) + ATP + H2O = vincristine(out) + ADP + phosphate + H(+). The catalysed reaction is 2',3'-cGAMP(in) + ATP + H2O = 2',3'-cGAMP(out) + ADP + phosphate + H(+). The enzyme catalyses S-[(2E,6E,10E)-geranylgeranyl]-L-glutathione(in) + ATP + H2O = S-[(2E,6E,10E)-geranylgeranyl]-L-glutathione(out) + ADP + phosphate + H(+). It catalyses the reaction prostaglandin A2-S-(R)-glutathione(in) + ATP + H2O = prostaglandin A2-S-(R)-glutathione(out) + ADP + phosphate + H(+). It carries out the reaction prostaglandin A2-S-(S)-glutathione(in) + ATP + H2O = prostaglandin A2-S-(S)-glutathione(out) + ADP + phosphate + H(+). With respect to regulation, MK 571 inhibits sphingosine 1-phosphate and leukotriene C4 export. Its function is as follows. Mediates export of organic anions and drugs from the cytoplasm. Mediates ATP-dependent transport of glutathione and glutathione conjugates, leukotriene C4, estradiol-17-beta-o-glucuronide, methotrexate, antiviral drugs and other xenobiotics. Confers resistance to anticancer drugs by decreasing accumulation of drug in cells, and by mediating ATP- and GSH-dependent drug export. Hydrolyzes ATP with low efficiency. Catalyzes the export of sphingosine 1-phosphate from mast cells independently of their degranulation. Participates in inflammatory response by allowing export of leukotriene C4 from leukotriene C4-synthesizing cells. Mediates ATP-dependent, GSH-independent cyclic GMP-AMP (cGAMP) export. Thus, by limiting intracellular cGAMP concentrations negatively regulates the cGAS-STING pathway. Exports S-geranylgeranyl-glutathione (GGG) in lymphoid cells and stromal compartments of lymphoid organs. ABCC1 (via extracellular transport) with GGT5 (via GGG catabolism) establish GGG gradients within lymphoid tissues to position P2RY8-positive lymphocytes at germinal centers in lymphoid follicles and restrict their chemotactic transmigration from blood vessels to the bone marrow parenchyma. Mediates basolateral export of GSH-conjugated R- and S-prostaglandin A2 diastereomers in polarized epithelial cells. The sequence is that of Multidrug resistance-associated protein 1 from Homo sapiens (Human).